A 208-amino-acid polypeptide reads, in one-letter code: Ribonuclease HII (208 aa).

The RNase H type-2 domain occupies 1–205 (MIVVGIDEAG…LQEIAPNYYI (205 aa)). A divalent metal cation is bound by residues Asp-7, Glu-8, and Asp-104.

The protein belongs to the RNase HII family. It depends on Mn(2+) as a cofactor. Mg(2+) is required as a cofactor.

It localises to the cytoplasm. It carries out the reaction Endonucleolytic cleavage to 5'-phosphomonoester.. In terms of biological role, endonuclease that specifically degrades the RNA of RNA-DNA hybrids. This chain is Ribonuclease HII, found in Sulfurisphaera tokodaii (strain DSM 16993 / JCM 10545 / NBRC 100140 / 7) (Sulfolobus tokodaii).